A 174-amino-acid polypeptide reads, in one-letter code: MIDSDGFRANVGIIICNRYGQVMWARRFGQHSWQFPQGGVDDGETAEEAMYRELYEEVGLRPEHVHILTSTRSWLRYRLPKRLVRQDSKPVCIGQKQKWFLLQLKSQDSAINLSSSGHPEFDDWRWVSYWYPVRQVVSFKRDVYRKVMKEFAVTALSFQTLEIPRKRGRQKTTG.

Residues 6–149 (GFRANVGIII…KRDVYRKVMK (144 aa)) form the Nudix hydrolase domain. The Nudix box motif lies at 38–59 (GGVDDGETAEEAMYRELYEEVG).

Belongs to the Nudix hydrolase family. RppH subfamily. The cofactor is a divalent metal cation.

In terms of biological role, accelerates the degradation of transcripts by removing pyrophosphate from the 5'-end of triphosphorylated RNA, leading to a more labile monophosphorylated state that can stimulate subsequent ribonuclease cleavage. The protein is RNA pyrophosphohydrolase of Shewanella baltica (strain OS223).